A 375-amino-acid chain; its full sequence is Esterase AN6793 (375 aa).

Residues 138 to 158 (RHPQPGLDPGHGHRHKRMPPL) are disordered.

Belongs to the sidJ hydrolase family. In terms of assembly, homodimer.

Its pathway is secondary metabolite biosynthesis. Its function is as follows. Esterase; part of a cluster that mediates the biosynthesis of a yet undetermined secondary metabolite. With the HR-PKS AN6791, produces a pathway intermediate compound with molecular weight 258. The polypeptide is Esterase AN6793 (Emericella nidulans (strain FGSC A4 / ATCC 38163 / CBS 112.46 / NRRL 194 / M139) (Aspergillus nidulans)).